Here is a 221-residue protein sequence, read N- to C-terminus: Histone H1.3 (221 aa).

The segment covering 1 to 17 (MSETAPAAPAAPAPVEK) has biased composition (low complexity). The disordered stretch occupies residues 1-42 (MSETAPAAPAAPAPVEKTPVKKKAKKTGAAAGKRKASGPPVS). Ser-2 is modified (N-acetylserine). Ser-2 carries the post-translational modification Phosphoserine. Lys-17 bears the N6-acetyllysine mark. Position 18 is a phosphothreonine (Thr-18). A compositionally biased stretch (basic residues) spans 20-36 (VKKKAKKTGAAAGKRKA). 3 positions are modified to N6-(beta-hydroxybutyryl)lysine: Lys-33, Lys-35, and Lys-53. Residues 37-110 (SGPPVSELIT…GASGSFKLNK (74 aa)) enclose the H15 domain. Arg-55 is modified (citrulline). 3 positions are modified to N6-(beta-hydroxybutyryl)lysine: Lys-65, Lys-86, and Lys-91. Residues 92–221 (GTLVQTKGTG…KAKKAAPRKK (130 aa)) are disordered. A Phosphoserine; by PKC modification is found at Ser-105. An N6-(beta-hydroxybutyryl)lysine mark is found at Lys-107 and Lys-141. Composition is skewed to basic residues over residues 120–141 (KAKK…KPKK), 150–161 (KTAKKTPKKAKK), 170–187 (KVSK…KKAA), and 194–221 (KAPK…PRKK).

It belongs to the histone H1/H5 family. H1 histones are progressively phosphorylated during the cell cycle, becoming maximally phosphorylated during late G2 phase and M phase, and being dephosphorylated sharply thereafter. In terms of processing, hydroxybutyrylation of histones is induced by starvation. Post-translationally, citrullination at Arg-55 (H1R54ci) by PADI4 takes place within the DNA-binding site of H1 and results in its displacement from chromatin and global chromatin decondensation, thereby promoting pluripotency and stem cell maintenance.

The protein localises to the nucleus. Its subcellular location is the chromosome. Functionally, histone H1 protein binds to linker DNA between nucleosomes forming the macromolecular structure known as the chromatin fiber. Histones H1 are necessary for the condensation of nucleosome chains into higher-order structured fibers. Also acts as a regulator of individual gene transcription through chromatin remodeling, nucleosome spacing and DNA methylation. This Mus musculus (Mouse) protein is Histone H1.3.